The primary structure comprises 353 residues: Nicotinate-nucleotide--dimethylbenzimidazole phosphoribosyltransferase (353 aa).

Glutamate 320 serves as the catalytic Proton acceptor.

This sequence belongs to the CobT family.

It catalyses the reaction 5,6-dimethylbenzimidazole + nicotinate beta-D-ribonucleotide = alpha-ribazole 5'-phosphate + nicotinate + H(+). It participates in nucleoside biosynthesis; alpha-ribazole biosynthesis; alpha-ribazole from 5,6-dimethylbenzimidazole: step 1/2. Functionally, catalyzes the synthesis of alpha-ribazole-5'-phosphate from nicotinate mononucleotide (NAMN) and 5,6-dimethylbenzimidazole (DMB). This chain is Nicotinate-nucleotide--dimethylbenzimidazole phosphoribosyltransferase, found in Syntrophotalea carbinolica (strain DSM 2380 / NBRC 103641 / GraBd1) (Pelobacter carbinolicus).